We begin with the raw amino-acid sequence, 494 residues long: GDP-fucose protein O-fucosyltransferase 4 (494 aa).

The Cytoplasmic portion of the chain corresponds to 1 to 7 (MAARYTE). The helical; Signal-anchor for type II membrane protein transmembrane segment at 8 to 24 (AVLAALGVLSVCSASSS) threads the bilayer. At 25 to 494 (SGSGASGKAG…EIFMKRNKNL (470 aa)) the chain is on the lumenal side. N-linked (GlcNAc...) asparagine glycosylation is present at asparagine 167. A disulfide bridge connects residues cysteine 390 and cysteine 393.

Belongs to the glycosyltransferase 10 family.

Its subcellular location is the endoplasmic reticulum membrane. The catalysed reaction is L-threonyl-[protein] + GDP-beta-L-fucose = 3-O-(alpha-L-fucosyl)-L-threonyl-[protein] + GDP + H(+). It catalyses the reaction L-seryl-[protein] + GDP-beta-L-fucose = 3-O-(alpha-L-fucosyl)-L-seryl-[protein] + GDP + H(+). The protein operates within protein modification; protein glycosylation. In terms of biological role, protein O-fucosyltransferase that specifically catalyzes O-fucosylation of serine or threonine residues in EMI domains of target proteins, such as MMRN1, MMRN2 and EMID1. Attaches fucose through an O-glycosidic linkage. O-fucosylation of EMI domain-containing proteins may be required for facilitating protein folding and secretion. Also shows minor alpha-(1,3)-fucosyltransferase activity toward activity toward biantennary N-glycan acceptors. However, this was tested with a library of synthetic substrates and this activity is unsure in vivo. The chain is GDP-fucose protein O-fucosyltransferase 4 (Fut11) from Rattus norvegicus (Rat).